Reading from the N-terminus, the 144-residue chain is Large ribosomal subunit protein uL15 (144 aa).

Residues 1–52 (MRLNTLSPAEGAKHAPKRVGRGIGSGLGKTAGRGHKGQNSRSGGGVRRGFEG) are disordered. A compositionally biased stretch (gly residues) spans 21–31 (RGIGSGLGKTA).

This sequence belongs to the universal ribosomal protein uL15 family. In terms of assembly, part of the 50S ribosomal subunit.

Functionally, binds to the 23S rRNA. In Yersinia enterocolitica serotype O:8 / biotype 1B (strain NCTC 13174 / 8081), this protein is Large ribosomal subunit protein uL15.